A 71-amino-acid polypeptide reads, in one-letter code: Dermonecrotic toxin LgSicTox-alphaI-Loxn-A (71 aa).

The active site involves His12. Mg(2+) contacts are provided by Glu32, Asp34, and Asp48.

It depends on Mg(2+) as a cofactor. In terms of processing, contains 2 disulfide bonds. In terms of tissue distribution, expressed by the venom gland.

It localises to the secreted. It carries out the reaction an N-(acyl)-sphingosylphosphocholine = an N-(acyl)-sphingosyl-1,3-cyclic phosphate + choline. It catalyses the reaction an N-(acyl)-sphingosylphosphoethanolamine = an N-(acyl)-sphingosyl-1,3-cyclic phosphate + ethanolamine. The catalysed reaction is a 1-acyl-sn-glycero-3-phosphocholine = a 1-acyl-sn-glycero-2,3-cyclic phosphate + choline. The enzyme catalyses a 1-acyl-sn-glycero-3-phosphoethanolamine = a 1-acyl-sn-glycero-2,3-cyclic phosphate + ethanolamine. Its function is as follows. Catalyzes the hydrolysis of sphingomyelin. May also act on other phosphatidyl esters. Functionally, dermonecrotic toxins cleave the phosphodiester linkage between the phosphate and headgroup of certain phospholipids (sphingolipid and lysolipid substrates), forming an alcohol (often choline) and a cyclic phosphate. This toxin acts on sphingomyelin (SM). It may also act on ceramide phosphoethanolamine (CPE), lysophosphatidylcholine (LPC) and lysophosphatidylethanolamine (LPE), but not on lysophosphatidylserine (LPS), and lysophosphatidylglycerol (LPG). It acts by transphosphatidylation, releasing exclusively cyclic phosphate products as second products. In vivo, induces dermonecrosis, but is not lethal. Induces hemolysis, vascular permeability, edema, inflammatory response, and platelet aggregation. The chain is Dermonecrotic toxin LgSicTox-alphaI-Loxn-A from Loxosceles gaucho (Spider).